A 775-amino-acid chain; its full sequence is Meiotic driver SPOK2 (775 aa).

Residues 4–69 (KDRIAQLLRE…RCERERLQLE (66 aa)) are a coiled coil. Disordered regions lie at residues 18–51 (KARE…REEE), 211–249 (QKDD…YICS), 442–525 (LSSA…AMAD), and 734–761 (PPPK…AQLF). The segment covering 444-457 (SAPSSQNTDISEYT) has biased composition (polar residues).

The protein localises to the cytoplasm. It localises to the nucleus. Its function is as follows. Promotes unequal transmission of alleles from the parental zygote to progeny spores by acting as poison/antidote system, leading to poisoning of progeny that do not inherit the allele. May possess DNA nuclease activity that leads to spore killing, and a kinase activity that confers resistance to the nuclease activity. The chain is Meiotic driver SPOK2 from Podospora anserina (strain S / ATCC MYA-4624 / DSM 980 / FGSC 10383) (Pleurage anserina).